Here is a 209-residue protein sequence, read N- to C-terminus: Pyroglutamyl-peptidase 1 (209 aa).

Catalysis depends on residues E85, C149, and H168.

This sequence belongs to the peptidase C15 family. Monomer.

It is found in the cytoplasm. The enzyme catalyses Release of an N-terminal pyroglutamyl group from a polypeptide, the second amino acid generally not being Pro.. With respect to regulation, inhibited by transition metal ions including Ni(2+), Zn(2+), and Cu(2+) and by sulfhydryl-blocking agents. Removes 5-oxoproline from various penultimate amino acid residues except L-proline. The polypeptide is Pyroglutamyl-peptidase 1 (PGPEP1) (Homo sapiens (Human)).